Reading from the N-terminus, the 1043-residue chain is Constitutive coactivator of PPAR-gamma-like protein 1 homolog (1043 aa).

Disordered stretches follow at residues 353-497 (SMVP…HMQI) and 929-1043 (YGRG…NKEE). Composition is skewed to polar residues over residues 362–375 (QMLN…QSRP) and 405–419 (SPIN…NHVD). Basic and acidic residues-rich tracts occupy residues 451-471 (TWDK…EQAK) and 951-964 (EVAK…EDSK). Residues 801 to 1043 (VELATKVEKM…LEGAVANKEE (243 aa)) are RNA binding. Residues 995–1010 (EARASSNSESALSSDS) are compositionally biased toward low complexity.

It belongs to the constitutive coactivator of PPAR-gamma family.

It is found in the cytoplasm. It localises to the cell membrane. Functionally, may bee involved in the oxidative stress-induced survival signaling. Binds RNA. May participate in mRNA transport in the cytoplasm. This is Constitutive coactivator of PPAR-gamma-like protein 1 homolog (fam120a) from Xenopus tropicalis (Western clawed frog).